Here is a 326-residue protein sequence, read N- to C-terminus: MSCAEVMYHPQPYGAPQYLPNPVAAATCPTACYHPAPQPGQQKKLAVYSKMQDSLEVTLPSKQEEEEEEEEDEEEEEKDQPAEMEYLNSRCVLFTYFQGDIGSVVDEHFSRALGQANTLHPESAISKSKMGLTPLWRDSSALSSQRSNFPTSFWTSSYQPPPAPCLGGVHPDFQVTAPHGTFTTADPNSWPGHGLHQTGPAPPPTASESWHYPLASQVSPSYSHMHDMYLRHHHPHAHVHHRHHHHHHPTAGSALDPAYGHLLMPSVRAARIPAPQCDITKTDLTTVTTATSAWAGAFHGTVDIVPSVGFDTGLQHQDKSKESTWY.

Positions 54–82 are disordered; that stretch reads SLEVTLPSKQEEEEEEEEDEEEEEKDQPA. Residue K62 forms a Glycyl lysine isopeptide (Lys-Gly) (interchain with G-Cter in SUMO2) linkage. Acidic residues predominate over residues 64 to 78; it reads EEEEEEEEDEEEEEK. A Glycyl lysine isopeptide (Lys-Gly) (interchain with G-Cter in SUMO2) cross-link involves residue K129. Positions 184–208 are disordered; sequence TADPNSWPGHGLHQTGPAPPPTASE.

This sequence belongs to the vestigial family.

The protein resides in the nucleus. In terms of biological role, may act as a specific coactivator for the mammalian TEFs. The polypeptide is Transcription cofactor vestigial-like protein 3 (Mus musculus (Mouse)).